The primary structure comprises 126 residues: Small ribosomal subunit protein uS11 (126 aa).

Belongs to the universal ribosomal protein uS11 family. Part of the 30S ribosomal subunit. Interacts with proteins S7 and S18. Binds to IF-3.

Its function is as follows. Located on the platform of the 30S subunit, it bridges several disparate RNA helices of the 16S rRNA. Forms part of the Shine-Dalgarno cleft in the 70S ribosome. The polypeptide is Small ribosomal subunit protein uS11 (Ehrlichia chaffeensis (strain ATCC CRL-10679 / Arkansas)).